Here is a 237-residue protein sequence, read N- to C-terminus: Mitochondrial inner membrane protease atp23 (237 aa).

His-136 is an a divalent metal cation binding site. Residue Glu-137 is part of the active site. His-140 lines the a divalent metal cation pocket.

The protein belongs to the peptidase M76 family.

It localises to the mitochondrion inner membrane. Has a dual role in the assembly of mitochondrial ATPase. Acts as a protease that removes N-terminal residues of mitochondrial ATPase CF(0) subunit 6 at the intermembrane space side. Also involved in the correct assembly of the membrane-embedded ATPase CF(0) particle, probably mediating association of subunit 6 with the subunit 9 ring. This Aspergillus clavatus (strain ATCC 1007 / CBS 513.65 / DSM 816 / NCTC 3887 / NRRL 1 / QM 1276 / 107) protein is Mitochondrial inner membrane protease atp23 (atp23).